The following is a 75-amino-acid chain: Dermaseptin-SP4 (75 aa).

The signal sequence occupies residues 1-22 (MAFLKKSLFLVLFLGLVSLSMC). A propeptide spanning residues 23–45 (EEEKRENEVEEEQEDDEQSELRR) is cleaved from the precursor. Pro-72 is subject to Proline amide. The propeptide occupies 74 to 75 (EQ).

Belongs to the frog skin active peptide (FSAP) family. Dermaseptin subfamily. Expressed by the skin glands.

The protein resides in the secreted. It is found in the target cell membrane. Antimicrobial peptide with activity against Gram-positive and Gram-negative bacteria and fungi. Has been tested against E.coli (MIC=47.25-128 uM), S.aureus (MIC=189-512 uM), K.pneumoniae (MIC=189 uM) and C.albicans (MIC&gt;189 uM). Probably acts by disturbing membrane functions with its alpha-helical amphipathic structure. May penetrate bacterial membranes, but stay at the mammalian membrane surface. Shows a weak hemolytic activity. In Agalychnis spurrelli (Gliding leaf frog), this protein is Dermaseptin-SP4.